The primary structure comprises 472 residues: Eukaryotic translation initiation factor 2 subunit 3 (472 aa).

Residues 39 to 247 (QATINIGTIG…YIVNKIPVPV (209 aa)) enclose the tr-type G domain. Positions 48–55 (GHVAHGKS) are G1. 51-56 (AHGKST) is a GTP binding site. The interval 76–80 (NITIK) is G2. The interval 134 to 137 (DCPG) is G3. Residues 190 to 193 (NKID) and 225 to 227 (SAQ) each bind GTP. The G4 stretch occupies residues 190 to 193 (NKID). The interval 225–227 (SAQ) is G5. The interacts with cdc123 stretch occupies residues 457-469 (GQIRRGVTITPTV).

The protein belongs to the TRAFAC class translation factor GTPase superfamily. Classic translation factor GTPase family. EIF2G subfamily. In terms of assembly, eukaryotic translation initiation factor 2 eIF2 is a heterotrimeric complex composed of an alpha (EIF2S1), a beta (EIF2S2) and a gamma (EIF2S3) chain. eIF2 is member of the 43S pre-initiation complex (43S PIC).

It localises to the cytoplasm. Its subcellular location is the cytosol. The catalysed reaction is GTP + H2O = GDP + phosphate + H(+). Its function is as follows. Member of the eIF2 complex that functions in the early steps of protein synthesis by forming a ternary complex with GTP and initiator tRNA. This complex binds to a 40S ribosomal subunit, followed by mRNA binding to form the 43S pre-initiation complex (43S PIC). Junction of the 60S ribosomal subunit to form the 80S initiation complex is preceded by hydrolysis of the GTP bound to eIF2 and release of an eIF2-GDP binary complex. In order for eIF2 to recycle and catalyze another round of initiation, the GDP bound to eIF2 must exchange with GTP by way of a reaction catalyzed by eIF-2B. The protein is Eukaryotic translation initiation factor 2 subunit 3 of Danio rerio (Zebrafish).